A 590-amino-acid polypeptide reads, in one-letter code: CTP synthase (590 aa).

Residues 1–281 (MPALRKHPQT…DAYVVRRLNL (281 aa)) form an amidoligase domain region. S23 provides a ligand contact to CTP. A UTP-binding site is contributed by S23. ATP contacts are provided by residues 24 to 29 (SLGKGL) and D81. Mg(2+) contacts are provided by D81 and E155. Residues 162–164 (DIE), 202–207 (KTKPTQ), and K238 each bind CTP. Residues 202-207 (KTKPTQ) and K238 each bind UTP. One can recognise a Glutamine amidotransferase type-1 domain in the interval 306–554 (RIALVGKYID…IGAAIDYKAA (249 aa)). G369 is an L-glutamine binding site. The active-site Nucleophile; for glutamine hydrolysis is the C396. L-glutamine contacts are provided by residues 397-400 (LGLQ), E419, and R480. Catalysis depends on residues H527 and E529.

Belongs to the CTP synthase family. In terms of assembly, homotetramer.

The catalysed reaction is UTP + L-glutamine + ATP + H2O = CTP + L-glutamate + ADP + phosphate + 2 H(+). It catalyses the reaction L-glutamine + H2O = L-glutamate + NH4(+). It carries out the reaction UTP + NH4(+) + ATP = CTP + ADP + phosphate + 2 H(+). It functions in the pathway pyrimidine metabolism; CTP biosynthesis via de novo pathway; CTP from UDP: step 2/2. Its activity is regulated as follows. Allosterically activated by GTP, when glutamine is the substrate; GTP has no effect on the reaction when ammonia is the substrate. The allosteric effector GTP functions by stabilizing the protein conformation that binds the tetrahedral intermediate(s) formed during glutamine hydrolysis. Inhibited by the product CTP, via allosteric rather than competitive inhibition. Catalyzes the ATP-dependent amination of UTP to CTP with either L-glutamine or ammonia as the source of nitrogen. Regulates intracellular CTP levels through interactions with the four ribonucleotide triphosphates. The chain is CTP synthase from Mycolicibacterium smegmatis (strain ATCC 700084 / mc(2)155) (Mycobacterium smegmatis).